Here is a 272-residue protein sequence, read N- to C-terminus: Shikimate dehydrogenase (NADP(+)) (272 aa).

Shikimate contacts are provided by residues 14-16 and Thr61; that span reads SKS. Lys65 (proton acceptor) is an active-site residue. Residue Glu77 participates in NADP(+) binding. Residues Asn86 and Asp102 each coordinate shikimate. NADP(+)-binding positions include 126 to 130, 149 to 154, and Met213; these read GAGGA and NRTVSR. Tyr215 provides a ligand contact to shikimate. NADP(+) is bound at residue Gly237.

This sequence belongs to the shikimate dehydrogenase family. In terms of assembly, homodimer.

It catalyses the reaction shikimate + NADP(+) = 3-dehydroshikimate + NADPH + H(+). Its pathway is metabolic intermediate biosynthesis; chorismate biosynthesis; chorismate from D-erythrose 4-phosphate and phosphoenolpyruvate: step 4/7. Its function is as follows. Involved in the biosynthesis of the chorismate, which leads to the biosynthesis of aromatic amino acids. Catalyzes the reversible NADPH linked reduction of 3-dehydroshikimate (DHSA) to yield shikimate (SA). The sequence is that of Shikimate dehydrogenase (NADP(+)) from Escherichia coli O6:H1 (strain CFT073 / ATCC 700928 / UPEC).